A 173-amino-acid polypeptide reads, in one-letter code: KIGIFFSTSTGNTTEVADFIGKTLGAKADAPIDVDDVTDPQALKDYDLLFLGAPTWNTGADTERSGTSWDEFLYDKLPEVDMKDLPVAIFGLGDAEGYPDNFCDAIEEIHDCFAKQGAKPVGFSNPDDYDYEESKSVRDGKFLGLPLDMVNDQIPMEKRVAGWVEAVVSETGV.

The Flavodoxin-like domain maps to I2–V168.

It belongs to the flavodoxin family. FMN serves as cofactor.

In terms of biological role, low-potential electron donor to a number of redox enzymes. In Chondrus crispus (Carrageen Irish moss), this protein is Flavodoxin.